Here is a 160-residue protein sequence, read N- to C-terminus: Serine-protein kinase RsbW (160 aa).

It belongs to the anti-sigma-factor family.

The catalysed reaction is L-seryl-[protein] + ATP = O-phospho-L-seryl-[protein] + ADP + H(+). The enzyme catalyses L-threonyl-[protein] + ATP = O-phospho-L-threonyl-[protein] + ADP + H(+). In terms of biological role, negative regulator of sigma-B activity. Phosphorylates and inactivates its specific antagonist protein, RsbV. Upon phosphorylation of RsbV, RsbW is released and binds to sigma-B, thereby blocking its ability to form an RNA polymerase holoenzyme (E-sigma-B). The protein is Serine-protein kinase RsbW of Bacillus cereus (strain Q1).